The sequence spans 963 residues: Adhesion G protein-coupled receptor D2 (963 aa).

The Extracellular portion of the chain corresponds to 1-662; the sequence is MDAPWGAGER…EEESLLRTLS (662 aa). The disordered stretch occupies residues 18–38; sequence DRSGVSLGPPPTPQVNQGTLG. The Pentraxin (PTX) domain occupies 116 to 325; that stretch reads TTAVLVFDER…LPTVWVRLLC (210 aa). The cysteines at positions 146 and 212 are disulfide-linked. The N-linked (GlcNAc...) asparagine glycan is linked to Asn271. Positions 489–649 constitute a GAIN-B domain; that stretch reads MALVASVQRL…AILLQIYEVQ (161 aa). Residues 599-649 are GPS; that stretch reads PLFPPHPPSPYTGGAWATTGCSVAALYLDSTACFCNHSTSFAILLQIYEVQ. Residues Cys619 and Cys633 are joined by a disulfide bond. An N-linked (GlcNAc...) asparagine glycan is attached at Asn634. The helical transmembrane segment at 663-683 threads the bilayer; sequence FVGCGVSFCALTTTFLLFLVA. Residues 684-691 are Cytoplasmic-facing; that stretch reads GVPKSERT. The chain crosses the membrane as a helical span at residues 692-712; the sequence is TVHKNLTFSLASAEGFLMTSE. Over 713–720 the chain is Extracellular; it reads WAKANEVA. The chain crosses the membrane as a helical span at residues 721–741; sequence CVAVTVAMHFLFLVAFSWMLV. Over 742–762 the chain is Cytoplasmic; it reads EGLLLWRKVVAVSMHPGPGMR. A helical transmembrane segment spans residues 763-783; the sequence is LYHATGWGVPVGIVAVTLAML. At 784–800 the chain is on the extracellular side; the sequence is PHDYVAPGHCWLNVHTN. Residues 801–821 form a helical membrane-spanning segment; it reads AIWAFVGPVLFVLTANTCILA. Over 822–857 the chain is Cytoplasmic; sequence RVVMITVSSARRRARMLSPQPCLQQQIWTQIWATVK. A helical membrane pass occupies residues 858 to 878; it reads PVLVLLPVLGLTWLAGILVHL. Residues 879–880 lie on the Extracellular side of the membrane; that stretch reads SP. The helical transmembrane segment at 881 to 901 threads the bilayer; that stretch reads AWAYAAVGLNSIQGLYIFLVY. Topologically, residues 902–963 are cytoplasmic; the sequence is AACNEEVRSA…TPRHPLKAPA (62 aa).

It belongs to the G-protein coupled receptor 2 family. Adhesion G-protein coupled receptor (ADGR) subfamily.

The protein resides in the membrane. In terms of biological role, orphan receptor. The polypeptide is Adhesion G protein-coupled receptor D2 (ADGRD2) (Homo sapiens (Human)).